We begin with the raw amino-acid sequence, 372 residues long: L-selectin (372 aa).

A signal peptide spans 1 to 28 (MIFPWKCQSTQRDLWNIFKLWGWTMLCC). Residues 29–38 (DFLAHHGTDC) constitute a propeptide that is removed on maturation. Over 39-332 (WTYHYSEKPM…FSMIKEGDYN (294 aa)) the chain is Extracellular. The C-type lectin domain occupies 55-155 (RFCRDNYTDL…ACHKLKAALC (101 aa)). Disulfide bonds link C57-C155, C128-C147, C128-C160, C160-C171, C165-C180, C182-C191, C197-C241, C227-C254, C259-C303, and C289-C316. N-linked (GlcNAc...) asparagine glycans are attached at residues N60 and N104. Positions 118, 120, 126, 143, and 144 each coordinate Ca(2+). In terms of domain architecture, EGF-like spans 156–192 (YTASCQPWSCSGHGECVEIINNYTCNCDVGYYGPQCQ). A glycan (N-linked (GlcNAc...) asparagine) is linked at N177. Sushi domains lie at 195–256 (IQCE…TCQV) and 257–318 (IQCE…ICQK). Residues N216, N232, N246, and N271 are each glycosylated (N-linked (GlcNAc...) asparagine). The helical transmembrane segment at 333 to 355 (PLFIPVAVMVTAFSGLAFIIWLA) threads the bilayer. Topologically, residues 356 to 372 (RRLKKGKKSKRSMDDPY) are cytoplasmic.

It belongs to the selectin/LECAM family. Interaction with SELPLG/PSGL1 and PODXL2 is required for promoting recruitment and rolling of leukocytes. This interaction is dependent on the sialyl Lewis X glycan modification of SELPLG and PODXL2, and tyrosine sulfation modifications of SELPLG. Sulfation on 'Tyr-51' of SELPLG is important for L-selectin binding. In terms of processing, N-glycosylated.

The protein resides in the cell membrane. Its function is as follows. Calcium-dependent lectin that mediates cell adhesion by binding to glycoproteins on neighboring cells. Mediates the adherence of lymphocytes to endothelial cells of high endothelial venules in peripheral lymph nodes. Promotes initial tethering and rolling of leukocytes in endothelia. This chain is L-selectin (SELL), found in Pan troglodytes (Chimpanzee).